A 315-amino-acid polypeptide reads, in one-letter code: Cytochrome f (315 aa).

A signal peptide spans 1 to 36 (MKQSLLSVLTKKSLRLLAALFLVVTSVFSLPQAAQA). Positions 37, 57, 60, and 61 each coordinate heme. Residues 281–301 (IKWLMVFFSAIMISQTLLVLK) traverse the membrane as a helical segment.

It belongs to the cytochrome f family. As to quaternary structure, the 4 large subunits of the cytochrome b6-f complex are cytochrome b6, subunit IV (17 kDa polypeptide, PetD), cytochrome f and the Rieske protein, while the 4 small subunits are PetG, PetL, PetM and PetN. The complex functions as a dimer. Heme serves as cofactor.

Its subcellular location is the cellular thylakoid membrane. Its function is as follows. Component of the cytochrome b6-f complex, which mediates electron transfer between photosystem II (PSII) and photosystem I (PSI), cyclic electron flow around PSI, and state transitions. The sequence is that of Cytochrome f from Acaryochloris marina (strain MBIC 11017).